The chain runs to 773 residues: DEAD-box ATP-dependent RNA helicase 32 (773 aa).

A disordered region spans residues 28–71 (IDAGKPARGTRPPPLSKSSSSPADTAAAKRGAKGAGGVPSKAAG). Residues 43–56 (SKSSSSPADTAAAK) are compositionally biased toward low complexity. The Q motif motif lies at 80 to 108 (ARFDELPLSNKTKDGLRKAGYTEMSEIQR). Residues 111-287 (LPHALCGRDV…RVSLKDPEYI (177 aa)) form the Helicase ATP-binding domain. 124-131 (AKTGSGKT) serves as a coordination point for ATP. The short motif at 235 to 238 (DEAD) is the DEAD box element. Positions 309 to 462 (PLEQKLNMLW…IKKPNTEQLQ (154 aa)) constitute a Helicase C-terminal domain. Positions 664-715 (DKDKISQRYAEMLREMQEHDKEDKLEHKRILREKKLQKKLKLKRKRNEEMDA) form a coiled coil. The span at 699-708 (LQKKLKLKRK) shows a compositional bias: basic residues. Residues 699–755 (LQKKLKLKRKRNEEMDAGSENSGSESDRDQRTASKGKKRYFNSDDEEGSKDAAKDGD) are disordered.

This sequence belongs to the DEAD box helicase family. DDX10/DBP4 subfamily.

The catalysed reaction is ATP + H2O = ADP + phosphate + H(+). In Oryza sativa subsp. japonica (Rice), this protein is DEAD-box ATP-dependent RNA helicase 32.